We begin with the raw amino-acid sequence, 394 residues long: Phosphoglycerate kinase (394 aa).

Residues 21-23, Arg36, 59-62, Arg118, and Arg151 contribute to the substrate site; these read DFN and HLGR. Residue Ser183 is modified to Phosphoserine. ATP is bound by residues Lys201 and Gly292. Thr299 carries the phosphothreonine modification. ATP is bound by residues Glu323 and 350–353; that span reads GGDS.

Belongs to the phosphoglycerate kinase family. As to quaternary structure, monomer.

The protein localises to the cytoplasm. It catalyses the reaction (2R)-3-phosphoglycerate + ATP = (2R)-3-phospho-glyceroyl phosphate + ADP. It functions in the pathway carbohydrate degradation; glycolysis; pyruvate from D-glyceraldehyde 3-phosphate: step 2/5. The protein is Phosphoglycerate kinase of Bacillus cereus (strain Q1).